The sequence spans 565 residues: Formate--tetrahydrofolate ligase (565 aa).

ATP is bound at residue 67-74; that stretch reads TPLGEGKT.

It belongs to the formate--tetrahydrofolate ligase family.

The catalysed reaction is (6S)-5,6,7,8-tetrahydrofolate + formate + ATP = (6R)-10-formyltetrahydrofolate + ADP + phosphate. It participates in one-carbon metabolism; tetrahydrofolate interconversion. The polypeptide is Formate--tetrahydrofolate ligase (Saccharopolyspora erythraea (strain ATCC 11635 / DSM 40517 / JCM 4748 / NBRC 13426 / NCIMB 8594 / NRRL 2338)).